The following is a 318-amino-acid chain: Pantothenate kinase (318 aa).

Residue 96-103 (GSVAVGKS) coordinates ATP.

The protein belongs to the prokaryotic pantothenate kinase family.

The protein resides in the cytoplasm. It carries out the reaction (R)-pantothenate + ATP = (R)-4'-phosphopantothenate + ADP + H(+). Its pathway is cofactor biosynthesis; coenzyme A biosynthesis; CoA from (R)-pantothenate: step 1/5. This chain is Pantothenate kinase, found in Rhodopseudomonas palustris (strain BisB5).